The primary structure comprises 311 residues: GTP cyclohydrolase FolE2 (311 aa).

It belongs to the GTP cyclohydrolase IV family.

The enzyme catalyses GTP + H2O = 7,8-dihydroneopterin 3'-triphosphate + formate + H(+). Its pathway is cofactor biosynthesis; 7,8-dihydroneopterin triphosphate biosynthesis; 7,8-dihydroneopterin triphosphate from GTP: step 1/1. Converts GTP to 7,8-dihydroneopterin triphosphate. The chain is GTP cyclohydrolase FolE2 from Xanthomonas campestris pv. campestris (strain B100).